The chain runs to 622 residues: Auxin efflux carrier component 1 (622 aa).

Over 1–6 (MITAAD) the chain is Extracellular. A helical transmembrane segment spans residues 7 to 27 (FYHVMTAMVPLYVAMILAYGS). Residues 28–44 (VKWWKIFTPDQCSGINR) lie on the Cytoplasmic side of the membrane. The helical transmembrane segment at 45 to 65 (FVALFAVPLLSFHFIAANNPY) threads the bilayer. Residue V51 participates in (indol-3-yl)acetate binding. Residues 66-70 (AMNLR) lie on the Extracellular side of the membrane. The chain crosses the membrane as a helical span at residues 71 to 91 (FLAADSLQKVIVLSLLFLWCK). Residues 92-100 (LSRNGSLDW) lie on the Cytoplasmic side of the membrane. The chain crosses the membrane as a helical span at residues 101–121 (TITLFSLSTLPNTLVMGIPLL). 2 residues coordinate (indol-3-yl)acetate: N112 and L114. Over 122–131 (KGMYGNFSGD) the chain is Extracellular. N-linked (GlcNAc...) asparagine glycosylation is present at N127. The helical transmembrane segment at 132–152 (LMVQIVVLQCIIWYTLMLFLF) threads the bilayer. A (indol-3-yl)acetate-binding site is contributed by Y145. The Cytoplasmic segment spans residues 153-482 (EYRGAKLLIS…LIRNPNSYSS (330 aa)). 4 positions are modified to phosphoserine: S209, S212, S221, and S225. Residues 213–233 (RSDIYSRRSQGLSATPRPSNL) form a disordered region. T227 bears the Phosphothreonine mark. Position 231 is a phosphoserine (S231). Phosphothreonine is present on T248. Phosphoserine occurs at positions 252, 253, and 271. Residues 268–362 (GRNSNFGPGE…PVVGGKRQDG (95 aa)) are disordered. Position 286 is a phosphothreonine (T286). Residue S290 is modified to Phosphoserine. Over residues 298–311 (PAKPTAAGTAAGAG) the composition is skewed to low complexity. Residue T302 is modified to Phosphothreonine. S317, S320, and S337 each carry phosphoserine. The residue at position 340 (T340) is a Phosphothreonine. S374, S377, S408, S414, S426, S434, and S446 each carry phosphoserine. Residues 483-503 (LFGITWSLISFKWNIEMPALI) form a helical membrane-spanning segment. Topologically, residues 504–506 (AKS) are extracellular. Residues 507-527 (ISILSDAGLGMAMFSLGLFMA) form a helical membrane-spanning segment. Topologically, residues 528 to 541 (LNPRIIACGNRRAA) are cytoplasmic. The chain crosses the membrane as a helical span at residues 542-562 (FAAAMRFVVGPAVMLVASYAV). Over 563-566 (GLRG) the chain is Extracellular. A helical membrane pass occupies residues 567-587 (VLLHVAIIQAALPQGIVPFVF). Residues I582 and V583 each contribute to the (indol-3-yl)acetate site. The Cytoplasmic segment spans residues 588–601 (AKEYNVHPDILSTA). The chain crosses the membrane as a helical span at residues 602 to 622 (VIFGMLIALPITLLYYILLGL).

The protein belongs to the auxin efflux carrier (TC 2.A.69.1) family. As to quaternary structure, homodimer. Interacts with TOPP4. Interacts with FYPP1 and FYPP3. Component of a complex made of PINs (e.g. PIN1 and PIN2), MAB4/MELs (e.g. NPY1/MAB4 and NPY5/MEL1) and AGC kinases (e.g. D6PK and PID) at the plasma membrane. Binds directly to NPY5/MEL1. In terms of tissue distribution, expressed at the basal side of elongated parenchymatous xylem cells.

It localises to the cell membrane. Auxin efflux carrier activity is competitively inhibited by naptalamate (N-1-naphthylphthalamic acid, NPA) but activated by D6PK-mediated phosphorylation. Acts as a component of the auxin efflux carrier; this activity is enhanced when activated by D6PK-mediated phosphorylation. Binds auxins including indole-3-acetic acid (IAA), indole-3-butyric acid (IBA), indole-3-propionic acid (IPA) and 4-chloroindole-3-acetic acid (4-Cl-IAA). Seems to be involved in the basipetal auxin transport. Mediates the formation of auxin gradient which is required to ensure correct organogenesis. Coordinated polar localization of PIN1 is directly regulated by the vesicle trafficking process and apical-basal PIN1 polarity also depends on the phosphorylation of conserved serine residues by PID kinase. The ARF-GEF protein GNOM is required for the correct recycling of PIN1 between the plasma membrane and endosomal compartments. Recrutes NPY proteins (e.g. NPY1/MAB4 and NPY5/MEL1) to the plasma membrane in a polar basal localization in root epidermis; this activity is optimized by AGC kinases-mediated (e.g. D6PK and PID) phosphorylation that limits their lateral diffusion-based escape. The chain is Auxin efflux carrier component 1 from Arabidopsis thaliana (Mouse-ear cress).